Reading from the N-terminus, the 243-residue chain is MSASPLDQFKILTIFKLPNIAGYNIDFTNASLFMVLSTISVALFCYIGLKKESIIPNGIQSIVEFIYEFIVSTIESNVGKEGLQYIPLVFTIFMFIATCNLLGILPLGFTATSHIAVTFAISMVVFVSVTIIGFKHQGIHFLRILLPQGTPGWLAPMMVFIELFAYCARPVSLSIRLAANMIAGHTIIKVIAGFVVKMNIFLTPLPMIFIIILIGFEIFVAILQAYIFTVLTCVYLSDAVKEH.

The next 7 helical transmembrane spans lie at 29-49, 54-74, 89-109, 114-134, 144-164, 182-202, and 208-228; these read NASLFMVLSTISVALFCYIGL, IIPNGIQSIVEFIYEFIVSTI, VFTIFMFIATCNLLGILPLGF, HIAVTFAISMVVFVSVTIIGF, ILLPQGTPGWLAPMMVFIELF, IAGHTIIKVIAGFVVKMNIFL, and IFIIILIGFEIFVAILQAYIF.

This sequence belongs to the ATPase A chain family. F-type ATPases have 2 components, CF(1) - the catalytic core - and CF(0) - the membrane proton channel. CF(1) has five subunits: alpha(3), beta(3), gamma(1), delta(1), epsilon(1). CF(0) has three main subunits: a(1), b(2) and c(9-12). The alpha and beta chains form an alternating ring which encloses part of the gamma chain. CF(1) is attached to CF(0) by a central stalk formed by the gamma and epsilon chains, while a peripheral stalk is formed by the delta and b chains.

It localises to the cell inner membrane. Its function is as follows. Key component of the proton channel; it plays a direct role in the translocation of protons across the membrane. The polypeptide is ATP synthase subunit a (Ehrlichia canis (strain Jake)).